Consider the following 135-residue polypeptide: Retinol-binding protein 1 (135 aa).

The important for interaction with STRA6 stretch occupies residues 22-32 (RALDVNVALRK). Residues lysine 41, methionine 63, and glutamine 109 each contribute to the all-trans-retinol site.

It belongs to the calycin superfamily. Fatty-acid binding protein (FABP) family. In terms of assembly, interacts (only as retinol-free apoprotein) with STRA6.

It localises to the cytoplasm. It is found in the lipid droplet. In terms of biological role, cytoplasmic retinol-binding protein. Accepts retinol from the transport protein STRA6, and thereby contributes to retinol uptake, storage and retinoid homeostasis. This Rattus norvegicus (Rat) protein is Retinol-binding protein 1 (Rbp1).